Reading from the N-terminus, the 543-residue chain is ATP-dependent ubiquitin transferase-like protein Cap2 (543 aa).

Residues 1–159 are E2-like domain; the sequence is MSSAAAVADV…QNCIVAHANG (159 aa). Catalysis depends on cysteine 84, which acts as the For E2-like domain. The tract at residues 160 to 305 is linker domain; it reads CPLWFITDNE…YLAQRNMPNS (146 aa). Residues 306–543 are adenylation plus E1-like domain; it reads KTLAGKNIAV…RDRECPLCNS (238 aa). Residues cysteine 450 and cysteine 453 each act as for E1-like domain in the active site.

In the C-terminal section; belongs to the HesA/MoeB/ThiF family. Forms a Cap2-CdnA complex. A Cap2 dimer is bound on either side by a CdnA monomer.

CD-NTase priming component of a CBASS antiviral system. CBASS (cyclic oligonucleotide-based antiphage signaling system) provides immunity against bacteriophages. The CD-NTase protein (CdnA) synthesizes cyclic nucleotides in response to infection; these serve as specific second messenger signals. The signals activate a diverse range of effectors, leading to bacterial cell death and thus abortive phage infection. A type II-A(GA) CBASS system. Its function is as follows. Acts as a protein transferase, conjugating CdnA, the CD-NTase, to unidentified target(s) in the cell probably via an E1-E2 ubiquitin transferase-like mechanism. This primes CdnA, upon phage infection CdnA activates and makes cyclic nucleotides. Protein conjugation requires ATP. In terms of biological role, the capV-cdnA-cap2-cap3 operon provides about 10(4)-fold protection in strain BWHPSA011 against infection by phage PaMx41. In P.aeruginosa strain PAO1 it confers protection against phages PaMx41 and JBD18 but not JBD67 (JBD18 and JBD67 do not replicate in BWHPSA011 / Pa011). When acb2 in JBD67 is deleted this CBASS operon then protects against JDB67 also. This CBASS system limits prophage induction of lysogenized JBD67 as well as viral lytic replication. The protein is ATP-dependent ubiquitin transferase-like protein Cap2 of Pseudomonas aeruginosa (strain BWHPSA011 / Pa011).